A 220-amino-acid chain; its full sequence is Probable chemoreceptor glutamine deamidase CheD 2 (220 aa).

It belongs to the CheD family.

It carries out the reaction L-glutaminyl-[protein] + H2O = L-glutamyl-[protein] + NH4(+). Its function is as follows. Probably deamidates glutamine residues to glutamate on methyl-accepting chemotaxis receptors (MCPs), playing an important role in chemotaxis. The polypeptide is Probable chemoreceptor glutamine deamidase CheD 2 (Methanosarcina acetivorans (strain ATCC 35395 / DSM 2834 / JCM 12185 / C2A)).